A 319-amino-acid polypeptide reads, in one-letter code: tRNA uridine(34) hydroxylase (319 aa).

The region spanning 124 to 218 is the Rhodanese domain; that stretch reads LDEDTVILDA…YGKNEETKGE (95 aa). Cys178 serves as the catalytic Cysteine persulfide intermediate.

It belongs to the TrhO family.

It carries out the reaction uridine(34) in tRNA + AH2 + O2 = 5-hydroxyuridine(34) in tRNA + A + H2O. Functionally, catalyzes oxygen-dependent 5-hydroxyuridine (ho5U) modification at position 34 in tRNAs. The protein is tRNA uridine(34) hydroxylase of Listeria monocytogenes serotype 4b (strain CLIP80459).